A 323-amino-acid polypeptide reads, in one-letter code: Aldo-keto reductase family 1 member C3 (323 aa).

NADP(+) contacts are provided by residues T23–Y24 and D50. Y55 functions as the Proton donor in the catalytic mechanism. H117 is a substrate binding site. NADP(+) is bound by residues S166 to N167, Q190, Y216 to Q222, K270 to Y272, and R276 to N280.

This sequence belongs to the aldo/keto reductase family. Expressed in many tissues including adrenal gland, brain, kidney, liver, lung, mammary gland, placenta, small intestine, colon, spleen, prostate and testis. High expression in prostate and mammary gland. In the prostate, higher levels in epithelial cells than in stromal cells. In the brain, expressed in medulla, spinal cord, frontotemporal lobes, thalamus, subthalamic nuclei and amygdala. Weaker expression in the hippocampus, substantia nigra and caudate.

Its subcellular location is the cytoplasm. The catalysed reaction is a 3alpha-hydroxysteroid + NADP(+) = a 3-oxosteroid + NADPH + H(+). It carries out the reaction a 3alpha-hydroxysteroid + NAD(+) = a 3-oxosteroid + NADH + H(+). It catalyses the reaction prostaglandin F2alpha + NADP(+) = prostaglandin D2 + NADPH + H(+). The enzyme catalyses prostaglandin F2alpha + NADP(+) = prostaglandin H2 + NADPH + H(+). The catalysed reaction is prostaglandin D2 + NADPH + H(+) = 11beta-prostaglandin F2 + NADP(+). It carries out the reaction prostaglandin D2-ethanolamide + NADPH + H(+) = 11beta-prostaglandin F2-ethanolamide + NADP(+). It catalyses the reaction testosterone + NAD(+) = androst-4-ene-3,17-dione + NADH + H(+). The enzyme catalyses testosterone + NADP(+) = androst-4-ene-3,17-dione + NADPH + H(+). The catalysed reaction is 17beta-estradiol + NADP(+) = estrone + NADPH + H(+). It carries out the reaction 17beta-estradiol + NAD(+) = estrone + NADH + H(+). It catalyses the reaction (20S)-hydroxypregn-4-en-3-one + NADP(+) = progesterone + NADPH + H(+). The enzyme catalyses (20S)-hydroxypregn-4-en-3-one + NAD(+) = progesterone + NADH + H(+). The catalysed reaction is 5alpha-androstane-3alpha,17beta-diol + NADP(+) = 17beta-hydroxy-5alpha-androstan-3-one + NADPH + H(+). It carries out the reaction 5alpha-androstane-3alpha,17beta-diol + NAD(+) = 17beta-hydroxy-5alpha-androstan-3-one + NADH + H(+). It catalyses the reaction androsterone + NADPH + H(+) = 5alpha-androstane-3alpha,17beta-diol + NADP(+). The enzyme catalyses 5alpha-androstane-3alpha,17beta-diol + NAD(+) = androsterone + NADH + H(+). The catalysed reaction is 5alpha-androstane-3beta,17beta-diol + NADP(+) = 17beta-hydroxy-5alpha-androstan-3-one + NADPH + H(+). It carries out the reaction 9-cis-retinol + NADP(+) = 9-cis-retinal + NADPH + H(+). Its pathway is steroid metabolism. Its activity is regulated as follows. Strongly inhibited by nonsteroidal anti-inflammatory drugs (NSAID) including flufenamic acid and indomethacin. Also inhibited by the flavinoid, rutin, and by selective serotonin inhibitors (SSRIs). The oxidation reaction is inhibited by low micromolar concentrations of NADPH. Its function is as follows. Cytosolic aldo-keto reductase that catalyzes the NADH and NADPH-dependent reduction of ketosteroids to hydroxysteroids. Acts as a NAD(P)(H)-dependent 3-, 17- and 20-ketosteroid reductase on the steroid nucleus and side chain and regulates the metabolism of androgens, estrogens and progesterone. Displays the ability to catalyze both oxidation and reduction in vitro, but most probably acts as a reductase in vivo since the oxidase activity measured in vitro is inhibited by physiological concentration of NADPH. Acts preferentially as a 17-ketosteroid reductase and has the highest catalytic efficiency of the AKR1C enzyme for the reduction of delta4-androstenedione to form testosterone. Reduces prostaglandin (PG) D2 to 11beta-prostaglandin F2, progesterone to 20alpha-hydroxyprogesterone and estrone to 17beta-estradiol. Catalyzes the transformation of the potent androgen dihydrotestosterone (DHT) into the less active form, 5-alpha-androstan-3-alpha,17-beta-diol (3-alpha-diol). Also displays retinaldehyde reductase activity toward 9-cis-retinal. The sequence is that of Aldo-keto reductase family 1 member C3 (AKR1C3) from Homo sapiens (Human).